The chain runs to 428 residues: Light-independent protochlorophyllide reductase subunit N (428 aa).

3 residues coordinate [4Fe-4S] cluster: C31, C56, and C117.

Belongs to the BchN/ChlN family. As to quaternary structure, protochlorophyllide reductase is composed of three subunits; BchL, BchN and BchB. Forms a heterotetramer of two BchB and two BchN subunits. The cofactor is [4Fe-4S] cluster.

The enzyme catalyses chlorophyllide a + oxidized 2[4Fe-4S]-[ferredoxin] + 2 ADP + 2 phosphate = protochlorophyllide a + reduced 2[4Fe-4S]-[ferredoxin] + 2 ATP + 2 H2O. Its pathway is porphyrin-containing compound metabolism; bacteriochlorophyll biosynthesis (light-independent). Functionally, component of the dark-operative protochlorophyllide reductase (DPOR) that uses Mg-ATP and reduced ferredoxin to reduce ring D of protochlorophyllide (Pchlide) to form chlorophyllide a (Chlide). This reaction is light-independent. The NB-protein (BchN-BchB) is the catalytic component of the complex. The sequence is that of Light-independent protochlorophyllide reductase subunit N from Rhodopseudomonas palustris (strain BisB18).